The primary structure comprises 62 residues: Large ribosomal subunit protein bL28 (62 aa).

The protein belongs to the bacterial ribosomal protein bL28 family.

The protein is Large ribosomal subunit protein bL28 of Halalkalibacterium halodurans (strain ATCC BAA-125 / DSM 18197 / FERM 7344 / JCM 9153 / C-125) (Bacillus halodurans).